Reading from the N-terminus, the 400-residue chain is Tryptophan--tRNA ligase, cytoplasmic (400 aa).

A 'HIGH' region motif is present at residues 95–104; sequence PSSGSLHFGH. The short motif at 281–285 is the 'KMSKS' region element; that stretch reads KMSAS.

The protein belongs to the class-I aminoacyl-tRNA synthetase family.

It localises to the cytoplasm. The enzyme catalyses tRNA(Trp) + L-tryptophan + ATP = L-tryptophyl-tRNA(Trp) + AMP + diphosphate + H(+). In Dictyostelium discoideum (Social amoeba), this protein is Tryptophan--tRNA ligase, cytoplasmic (trpS).